Here is a 285-residue protein sequence, read N- to C-terminus: Transcription factor MYB15 (285 aa).

HTH myb-type domains lie at 9-61 and 62-116; these read KMGL…MNYL and KPDI…KKRL. 2 consecutive DNA-binding regions (H-T-H motif) follow at residues 37–61 and 89–112; these read WRAL…MNYL and WSAI…HTHL. The disordered stretch occupies residues 115-172; it reads RLEDYQPAKPKTSNKKKGTKPKSESVITSSNSTRSESELADSSNPSGESLFSTSPSTS. Polar residues predominate over residues 139–158; it reads SVITSSNSTRSESELADSSN. Residues 159–172 show a composition bias toward low complexity; it reads PSGESLFSTSPSTS.

Interacts with SCRM/ICE1. As to expression, expressed in roots, leaves, stems and flowers. Expressed in stomatal guard cells.

The protein localises to the nucleus. Its function is as follows. Transcription factor involved in cold-regulation of CBF genes and in the development of freezing tolerance. May be part of a complex network of transcription factors controlling the expression of CBF genes and other genes in response to cold stress. Binds to the MYB recognition sequences in the promoters of CBF1, CBF2 and CBF3 genes. Involved in drought and salt tolerance. May enhance expression levels of genes involved in abscisic acid (ABA) biosynthesis and signaling, as well as those encoding stress-protective proteins. The sequence is that of Transcription factor MYB15 from Arabidopsis thaliana (Mouse-ear cress).